A 210-amino-acid polypeptide reads, in one-letter code: LexA repressor (210 aa).

The H-T-H motif DNA-binding region spans 25–44 (AGQVAQEVGITKQAISQQVN). Residues S120 and K159 each act as for autocatalytic cleavage activity in the active site.

Belongs to the peptidase S24 family. As to quaternary structure, homodimer.

The enzyme catalyses Hydrolysis of Ala-|-Gly bond in repressor LexA.. Represses a number of genes involved in the response to DNA damage (SOS response), including recA and lexA. In the presence of single-stranded DNA, RecA interacts with LexA causing an autocatalytic cleavage which disrupts the DNA-binding part of LexA, leading to derepression of the SOS regulon and eventually DNA repair. The polypeptide is LexA repressor (Deinococcus radiodurans (strain ATCC 13939 / DSM 20539 / JCM 16871 / CCUG 27074 / LMG 4051 / NBRC 15346 / NCIMB 9279 / VKM B-1422 / R1)).